Reading from the N-terminus, the 343-residue chain is Aspartate carbamoyltransferase catalytic subunit (343 aa).

Residues Arg54 and Thr55 each contribute to the carbamoyl phosphate site. Lys82 is an L-aspartate binding site. Carbamoyl phosphate is bound by residues Arg104, His134, and Gln137. Residues Arg177 and Arg232 each coordinate L-aspartate. Carbamoyl phosphate contacts are provided by Gly277 and Pro278. The interval 323-343 (PDQSNPQRNVTNTSNWQETKR) is disordered.

It belongs to the aspartate/ornithine carbamoyltransferase superfamily. ATCase family. Heterododecamer (2C3:3R2) of six catalytic PyrB chains organized as two trimers (C3), and six regulatory PyrI chains organized as three dimers (R2).

The enzyme catalyses carbamoyl phosphate + L-aspartate = N-carbamoyl-L-aspartate + phosphate + H(+). It functions in the pathway pyrimidine metabolism; UMP biosynthesis via de novo pathway; (S)-dihydroorotate from bicarbonate: step 2/3. Catalyzes the condensation of carbamoyl phosphate and aspartate to form carbamoyl aspartate and inorganic phosphate, the committed step in the de novo pyrimidine nucleotide biosynthesis pathway. This Renibacterium salmoninarum (strain ATCC 33209 / DSM 20767 / JCM 11484 / NBRC 15589 / NCIMB 2235) protein is Aspartate carbamoyltransferase catalytic subunit.